The primary structure comprises 20 residues: Unknown protein NF003 from 2D-PAGE (20 aa).

The chain is Unknown protein NF003 from 2D-PAGE from Naegleria fowleri (Brain eating amoeba).